Here is a 323-residue protein sequence, read N- to C-terminus: Prostaglandin-E(2) 9-reductase (323 aa).

Residues 23-24 (TY) and Asp-50 each bind NADP(+). Tyr-24 is a binding site for substrate. Residue Tyr-55 is the Proton donor of the active site. His-117 lines the substrate pocket. NADP(+) is bound by residues 166 to 167 (SN), Gln-190, 216 to 221 (YSALGS), and 270 to 280 (KSFTEKRIKEN).

It belongs to the aldo/keto reductase family.

Its subcellular location is the cytoplasm. The catalysed reaction is prostaglandin F2alpha + NADP(+) = prostaglandin E2 + NADPH + H(+). It catalyses the reaction (17R,20S)-17,20-dihydroxypregn-4-en-3-one + NADP(+) = 17alpha-hydroxyprogesterone + NADPH + H(+). The enzyme catalyses (17R,20S)-17,20-dihydroxypregn-4-en-3-one + NAD(+) = 17alpha-hydroxyprogesterone + NADH + H(+). Functionally, can convert prostaglandin E2 to prostaglandin F2-alpha. The polypeptide is Prostaglandin-E(2) 9-reductase (AKR1C5) (Oryctolagus cuniculus (Rabbit)).